We begin with the raw amino-acid sequence, 512 residues long: NAD(P)H-quinone oxidoreductase subunit 2 B, chloroplastic (512 aa).

Transmembrane regions (helical) follow at residues 31-51 (FIFP…IDLT), 57-77 (IPWL…ALLF), 99-119 (IFQF…VEYI), 124-144 (MAIT…MFLC), 149-169 (LITI…LSGY), 183-203 (YLLM…WLYG), 229-249 (ISIA…LAPF), 261-281 (PTPV…ALAT), 295-315 (WHLL…LIAI), 323-343 (MLAY…IVGD), 354-374 (YMLF…LFGL), 395-415 (ALSL…AGFF), 418-438 (LYLF…IGLL), and 484-504 (MIVC…IIAI).

This sequence belongs to the complex I subunit 2 family. NDH is composed of at least 16 different subunits, 5 of which are encoded in the nucleus.

The protein resides in the plastid. Its subcellular location is the chloroplast thylakoid membrane. The enzyme catalyses a plastoquinone + NADH + (n+1) H(+)(in) = a plastoquinol + NAD(+) + n H(+)(out). It carries out the reaction a plastoquinone + NADPH + (n+1) H(+)(in) = a plastoquinol + NADP(+) + n H(+)(out). Functionally, NDH shuttles electrons from NAD(P)H:plastoquinone, via FMN and iron-sulfur (Fe-S) centers, to quinones in the photosynthetic chain and possibly in a chloroplast respiratory chain. The immediate electron acceptor for the enzyme in this species is believed to be plastoquinone. Couples the redox reaction to proton translocation, and thus conserves the redox energy in a proton gradient. The sequence is that of NAD(P)H-quinone oxidoreductase subunit 2 B, chloroplastic from Arabidopsis thaliana (Mouse-ear cress).